The sequence spans 378 residues: Fetuin-B (378 aa).

Residues 1 to 18 form the signal peptide; the sequence is MGVLRLLVLCTLAACCVA. Cystatin fetuin-B-type domains are found at residues 28–141 and 152–261; these read NAPF…YNCT and SMCP…VSCE. N40 carries N-linked (GlcNAc...) asparagine glycosylation. Intrachain disulfides connect C96-C107, C120-C140, C154-C157, C217-C224, and C237-C260. N139 is a glycosylation site (N-linked (GlcNAc...) asparagine). 2 disordered regions span residues 266–338 and 357–378; these read QDQV…PQGD and LPFP…QRTP. The segment covering 286–297 has biased composition (polar residues); the sequence is QKNTAPTSSPSI. 2 O-linked (GalNAc...) threonine glycosylation sites follow: T289 and T292. S316 carries the phosphoserine modification. Over residues 362–378 the composition is skewed to basic and acidic residues; that stretch reads KEQRSPECPGPEKQRTP.

This sequence belongs to the fetuin family. In terms of tissue distribution, liver.

It localises to the secreted. Functionally, protease inhibitor required for egg fertilization. Required to prevent premature zona pellucida hardening before fertilization, probably by inhibiting the protease activity of ASTL, a protease that mediates the cleavage of ZP2 and triggers zona pellucida hardening. The sequence is that of Fetuin-B (Fetub) from Rattus norvegicus (Rat).